Consider the following 302-residue polypeptide: MRLPRRLKIKRFHKPSCSSILPKYPGCPFSLNLSLSFLNFTHYDVHLQMINRFFPNVYYSVVIPIILLSTSYSAKIAPKCRDTDMNCAVWVATNTSDCENVELVNSHCPRTCQTCGEPIDPKYDVKLLPAKLKSIAWMVGRWRSEFGGKAFFPTIPKFTYGEQVDITIADNSQDTHTPLLNYTAFAWDINMPDGDPTEIHSENGYIAVEYDKEQEKEYVSLNTAMSNGFMTIEEGESGPNQVKFRLQRIGRISFSHDSAVRIMFREWTLLDENRLEARLLMTTTITRRLMEHTAVIYKKIYP.

N-linked (GlcNAc...) asparagine glycans are attached at residues N32, N39, and N94. Residues 80 to 115 (CRDTDMNCAVWVATNTSDCENVELVNSHCPRTCQTC) form the ShKT domain. Intrachain disulfides connect C80-C115, C87-C108, and C98-C112. An N-linked (GlcNAc...) asparagine glycan is attached at N181.

This is an uncharacterized protein from Caenorhabditis elegans.